Consider the following 995-residue polypeptide: Protein translocase subunit SecA (995 aa).

ATP is bound by residues Gln86, Gly104–Thr108, and Asp535. The interval Ala883 to Leu911 is disordered. 4 residues coordinate Zn(2+): Cys912, Cys914, Cys923, and His924. Residues Pro939–Arg995 form a disordered region. Residues Ala957–Ile969 show a composition bias toward low complexity.

It belongs to the SecA family. Monomer and homodimer. Part of the essential Sec protein translocation apparatus which comprises SecA, SecYEG and auxiliary proteins SecDF. Other proteins may also be involved. Zn(2+) is required as a cofactor.

It localises to the cell membrane. It is found in the cytoplasm. The catalysed reaction is ATP + H2O + cellular proteinSide 1 = ADP + phosphate + cellular proteinSide 2.. Its function is as follows. Part of the Sec protein translocase complex. Interacts with the SecYEG preprotein conducting channel. Has a central role in coupling the hydrolysis of ATP to the transfer of proteins into and across the cell membrane, serving as an ATP-driven molecular motor driving the stepwise translocation of polypeptide chains across the membrane. In Chloroflexus aurantiacus (strain ATCC 29366 / DSM 635 / J-10-fl), this protein is Protein translocase subunit SecA.